We begin with the raw amino-acid sequence, 356 residues long: MSL complex subunit 3B (356 aa).

Positions 2 to 350 constitute an MRG domain; it reads EERTVTLEIP…SEVHYSTRNP (349 aa). Disordered regions lie at residues 135-210 and 225-247; these read TNRS…WQQD and KTPV…SPVF. Positions 142 to 156 are enriched in low complexity; sequence LSPSLRLLNPSRPQS. 2 stretches are compositionally biased toward polar residues: residues 178-189 and 229-243; these read AVQSLRRSSPHT and HSRS…SQEG.

Its subcellular location is the nucleus. Functionally, probable non-catalytic component of the MSL histone acetyltransferase complex, a multiprotein complex that mediates the majority of histone H4 acetylation at 'Lys-16' (H4K16ac), an epigenetic mark that prevents chromatin compaction. This is MSL complex subunit 3B from Homo sapiens (Human).